The sequence spans 30 residues: Cytochrome b6/f complex 12.6 kDa peptide (30 aa).

The segment at 1-30 is disordered; the sequence is SGSGVRSAKKGGKAQGGQAGVGYKGSTEPG. A compositionally biased stretch (gly residues) spans 13–23; the sequence is KAQGGQAGVGY.

It is found in the plastid. The protein resides in the chloroplast. Its function is as follows. May be a component of the cytochrome b6/f complex which is part of the photosynthetic respiratory chain. This chain is Cytochrome b6/f complex 12.6 kDa peptide, found in Euglena gracilis.